We begin with the raw amino-acid sequence, 114 residues long: Flagellar hook-basal body complex protein FliE (114 aa).

The protein belongs to the FliE family.

The protein resides in the bacterial flagellum basal body. The sequence is that of Flagellar hook-basal body complex protein FliE from Burkholderia lata (strain ATCC 17760 / DSM 23089 / LMG 22485 / NCIMB 9086 / R18194 / 383).